Consider the following 141-residue polypeptide: uncharacterized protein (141 aa).

Residues isoleucine 114–isoleucine 134 traverse the membrane as a helical segment.

The protein resides in the membrane. This is an uncharacterized protein from Schizosaccharomyces pombe (strain 972 / ATCC 24843) (Fission yeast).